Here is a 329-residue protein sequence, read N- to C-terminus: MANYAAMTGWGMAVPERVLTNADLERIVETSDEWIQTRTGIRERRVAGPGEYTSTLSIAAGRAALERAGLDAAQIDTVILATCTPDRPFPATACTIQAGIGARRAAAFDLVAACSGFVYGLNVATSMIRSGAARNVLFVACDIFTHFINWNDRNTCVLFGDGAGAVVLQPSDEPAGLISCVLGADGEQEDLMAVDAGGTRLPATPELLEQGRQYVYMNGREIFKHAVREMAASSLEAIRVAGLSPDDIALVVPHQANLRIIEATARRLEVPMERVFVNLDRYGNTSAASVPIALVEAVEQQRLRKGDYALLTAFGGGLTWASAVIRWTA.

Catalysis depends on residues C114 and H254. Residues 255 to 259 (QANLR) are ACP-binding. N284 is a catalytic residue.

Belongs to the thiolase-like superfamily. FabH family. As to quaternary structure, homodimer.

It localises to the cytoplasm. The catalysed reaction is malonyl-[ACP] + acetyl-CoA + H(+) = 3-oxobutanoyl-[ACP] + CO2 + CoA. It participates in lipid metabolism; fatty acid biosynthesis. Catalyzes the condensation reaction of fatty acid synthesis by the addition to an acyl acceptor of two carbons from malonyl-ACP. Catalyzes the first condensation reaction which initiates fatty acid synthesis and may therefore play a role in governing the total rate of fatty acid production. Possesses both acetoacetyl-ACP synthase and acetyl transacylase activities. Its substrate specificity determines the biosynthesis of branched-chain and/or straight-chain of fatty acids. The sequence is that of Beta-ketoacyl-[acyl-carrier-protein] synthase III from Roseiflexus sp. (strain RS-1).